The chain runs to 216 residues: Thiamine-phosphate synthase (216 aa).

Residues 35 to 39 (QLRDK) and Asn67 contribute to the 4-amino-2-methyl-5-(diphosphooxymethyl)pyrimidine site. Mg(2+) contacts are provided by Asp68 and Asp87. A 4-amino-2-methyl-5-(diphosphooxymethyl)pyrimidine-binding site is contributed by Ser106. 2-[(2R,5Z)-2-carboxy-4-methylthiazol-5(2H)-ylidene]ethyl phosphate is bound at residue 132 to 134 (TSS). Position 135 (Lys135) interacts with 4-amino-2-methyl-5-(diphosphooxymethyl)pyrimidine. Residues Gly163 and 183-184 (IS) contribute to the 2-[(2R,5Z)-2-carboxy-4-methylthiazol-5(2H)-ylidene]ethyl phosphate site.

Belongs to the thiamine-phosphate synthase family. The cofactor is Mg(2+).

It carries out the reaction 2-[(2R,5Z)-2-carboxy-4-methylthiazol-5(2H)-ylidene]ethyl phosphate + 4-amino-2-methyl-5-(diphosphooxymethyl)pyrimidine + 2 H(+) = thiamine phosphate + CO2 + diphosphate. It catalyses the reaction 2-(2-carboxy-4-methylthiazol-5-yl)ethyl phosphate + 4-amino-2-methyl-5-(diphosphooxymethyl)pyrimidine + 2 H(+) = thiamine phosphate + CO2 + diphosphate. The catalysed reaction is 4-methyl-5-(2-phosphooxyethyl)-thiazole + 4-amino-2-methyl-5-(diphosphooxymethyl)pyrimidine + H(+) = thiamine phosphate + diphosphate. Its pathway is cofactor biosynthesis; thiamine diphosphate biosynthesis; thiamine phosphate from 4-amino-2-methyl-5-diphosphomethylpyrimidine and 4-methyl-5-(2-phosphoethyl)-thiazole: step 1/1. Condenses 4-methyl-5-(beta-hydroxyethyl)thiazole monophosphate (THZ-P) and 2-methyl-4-amino-5-hydroxymethyl pyrimidine pyrophosphate (HMP-PP) to form thiamine monophosphate (TMP). This chain is Thiamine-phosphate synthase, found in Methanoregula boonei (strain DSM 21154 / JCM 14090 / 6A8).